The sequence spans 203 residues: Holliday junction branch migration complex subunit RuvA (203 aa).

Residues 1–61 form a domain I region; it reads MIIYKYGKIM…EYTKVTYGFD (61 aa). The segment at 62 to 139 is domain II; it reads NFKELVIFED…KFMKKLTSDE (78 aa). The flexible linker stretch occupies residues 140–147; sequence AAKIKVPA. Residues 147–203 form a domain III region; that stretch reads ASSENENKFLDTMKMLGFKQQQIKFALDKIELNDDIETCVENAIKLISQQQHETSRV.

The protein belongs to the RuvA family. As to quaternary structure, homotetramer. Forms an RuvA(8)-RuvB(12)-Holliday junction (HJ) complex. HJ DNA is sandwiched between 2 RuvA tetramers; dsDNA enters through RuvA and exits via RuvB. An RuvB hexamer assembles on each DNA strand where it exits the tetramer. Each RuvB hexamer is contacted by two RuvA subunits (via domain III) on 2 adjacent RuvB subunits; this complex drives branch migration. In the full resolvosome a probable DNA-RuvA(4)-RuvB(12)-RuvC(2) complex forms which resolves the HJ.

It is found in the cytoplasm. Its function is as follows. The RuvA-RuvB-RuvC complex processes Holliday junction (HJ) DNA during genetic recombination and DNA repair, while the RuvA-RuvB complex plays an important role in the rescue of blocked DNA replication forks via replication fork reversal (RFR). RuvA specifically binds to HJ cruciform DNA, conferring on it an open structure. The RuvB hexamer acts as an ATP-dependent pump, pulling dsDNA into and through the RuvAB complex. HJ branch migration allows RuvC to scan DNA until it finds its consensus sequence, where it cleaves and resolves the cruciform DNA. This chain is Holliday junction branch migration complex subunit RuvA, found in Metamycoplasma arthritidis (strain 158L3-1) (Mycoplasma arthritidis).